The sequence spans 386 residues: Branched-chain-amino-acid aminotransferase, cytosolic (386 aa).

The residue at position 1 (M1) is an N-acetylmethionine. K222 bears the N6-(pyridoxal phosphate)lysine mark.

It belongs to the class-IV pyridoxal-phosphate-dependent aminotransferase family. As to quaternary structure, homodimer. Pyridoxal 5'-phosphate serves as cofactor. In terms of tissue distribution, expressed in brain and kidney. Overexpressed in MYC-induced brain tumors, lymphomas, as well as in a teratocarcinoma cell line.

It is found in the cytoplasm. It carries out the reaction L-leucine + 2-oxoglutarate = 4-methyl-2-oxopentanoate + L-glutamate. The catalysed reaction is L-isoleucine + 2-oxoglutarate = (S)-3-methyl-2-oxopentanoate + L-glutamate. The enzyme catalyses L-valine + 2-oxoglutarate = 3-methyl-2-oxobutanoate + L-glutamate. Its function is as follows. Catalyzes the first reaction in the catabolism of the essential branched chain amino acids leucine, isoleucine, and valine. This is Branched-chain-amino-acid aminotransferase, cytosolic (Bcat1) from Mus musculus (Mouse).